Here is a 20-residue protein sequence, read N- to C-terminus: Superoxide dismutase [Mn], mitochondrial (20 aa).

This sequence belongs to the iron/manganese superoxide dismutase family. In terms of assembly, homotetramer. The cofactor is Mn(2+).

The protein localises to the mitochondrion matrix. It carries out the reaction 2 superoxide + 2 H(+) = H2O2 + O2. In terms of biological role, destroys superoxide anion radicals which are normally produced within the cells and which are toxic to biological systems. This is Superoxide dismutase [Mn], mitochondrial (SODA) from Hordeum vulgare (Barley).